Reading from the N-terminus, the 439-residue chain is Putative porin QuiX (439 aa).

An N-terminal signal peptide occupies residues 1–22; that stretch reads MRHFFKLGLVSAAVLGSQMTLA.

The protein belongs to the OprB family.

The protein localises to the cell outer membrane. Functionally, could be involved in the transport of quinate or shikimate. In Acinetobacter baylyi (strain ATCC 33305 / BD413 / ADP1), this protein is Putative porin QuiX (quiX).